The primary structure comprises 120 residues: MKILFVLISILYAVYRFSSEEDVDSAYLANELEPVEDINSEQYAALEPKEEQERSCAGMGQDCKDDCDCCLNIATCNCWFGRYFCSCTFGDYQTCLRKKGKCKRNRPQSCPRSNLNRKKG.

An N-terminal signal peptide occupies residues 1 to 19 (MKILFVLISILYAVYRFSS). Positions 20 to 54 (EEDVDSAYLANELEPVEDINSEQYAALEPKEEQER) are excised as a propeptide. 4 disulfide bridges follow: C56–C70, C63–C76, C69–C87, and C78–C85. The Agouti domain occupies 56 to 95 (CAGMGQDCKDDCDCCLNIATCNCWFGRYFCSCTFGDYQTC).

This sequence belongs to the neurotoxin 05 (agouti) family. Contains 6 disulfide bonds. As to expression, expressed by the venom gland.

The protein localises to the secreted. The sequence is that of U13-lycotoxin-Ls1f from Lycosa singoriensis (Wolf spider).